The primary structure comprises 159 residues: Ribosomal RNA large subunit methyltransferase H (159 aa).

Residues L76, G108, and 127 to 132 each bind S-adenosyl-L-methionine; that span reads FGLLTL.

This sequence belongs to the RNA methyltransferase RlmH family. As to quaternary structure, homodimer.

It is found in the cytoplasm. It carries out the reaction pseudouridine(1915) in 23S rRNA + S-adenosyl-L-methionine = N(3)-methylpseudouridine(1915) in 23S rRNA + S-adenosyl-L-homocysteine + H(+). In terms of biological role, specifically methylates the pseudouridine at position 1915 (m3Psi1915) in 23S rRNA. The chain is Ribosomal RNA large subunit methyltransferase H from Streptococcus pyogenes serotype M5 (strain Manfredo).